Here is a 186-residue protein sequence, read N- to C-terminus: Probable RNA 2'-phosphotransferase (186 aa).

The protein belongs to the KptA/TPT1 family.

In terms of biological role, removes the 2'-phosphate from RNA via an intermediate in which the phosphate is ADP-ribosylated by NAD followed by a presumed transesterification to release the RNA and generate ADP-ribose 1''-2''-cyclic phosphate (APPR&gt;P). May function as an ADP-ribosylase. The sequence is that of Probable RNA 2'-phosphotransferase from Hahella chejuensis (strain KCTC 2396).